Consider the following 272-residue polypeptide: 3',5'-cyclic adenosine monophosphate phosphodiesterase CpdA (272 aa).

Fe cation contacts are provided by Asp-21, His-23, Asp-63, Asn-93, His-161, His-200, and His-202. AMP contacts are provided by residues His-23, Asp-63, and 93-94; that span reads NH. Position 202 (His-202) interacts with AMP.

Belongs to the cyclic nucleotide phosphodiesterase class-III family. Monomer. The cofactor is a divalent metal cation.

The catalysed reaction is 3',5'-cyclic AMP + H2O = AMP + H(+). Its activity is regulated as follows. Activated by iron. Other divalent metal ions have no effect. In terms of biological role, hydrolyzes cAMP to 5'-AMP. Plays an important regulatory role in modulating the intracellular concentration of cAMP, thereby influencing cAMP-dependent processes. Specifically required for regulation of virulence factors. Can also hydrolyze cGMP, but cGMP is unlikely to be synthesized by P.aeruginosa and cAMP is probably the biologically relevant substrate for CpdA in vivo. This Pseudomonas aeruginosa protein is 3',5'-cyclic adenosine monophosphate phosphodiesterase CpdA.